Consider the following 481-residue polypeptide: Probable myosin light chain kinase DDB_G0284661 (481 aa).

Positions Tyr-13–Ile-269 constitute a Protein kinase domain. ATP contacts are provided by residues Ile-19 to Val-27 and Lys-43. Asp-136 (proton acceptor) is an active-site residue. Disordered regions lie at residues Pro-285–Lys-315 and Ser-345–Glu-427. Low complexity predominate over residues Ser-379–Phe-421.

The protein belongs to the protein kinase superfamily. CAMK Ser/Thr protein kinase family. CaMK subfamily.

The catalysed reaction is L-seryl-[myosin light chain] + ATP = O-phospho-L-seryl-[myosin light chain] + ADP + H(+). The enzyme catalyses L-threonyl-[myosin light chain] + ATP = O-phospho-L-threonyl-[myosin light chain] + ADP + H(+). Its activity is regulated as follows. Does not have a calmodulin-binding domain. Its function is as follows. May phosphorylate a specific serine in the N-terminus of a myosin light chain. In Dictyostelium discoideum (Social amoeba), this protein is Probable myosin light chain kinase DDB_G0284661.